The following is a 313-amino-acid chain: MSFPTVFIDGDQGTTGLQIHARLRDRTDVRLLTLPAAERKDAARRADALNACDIAILCLPDAAAREAVGFIRNPAVRVIDASSAHRTQPDWVYGFPEMADGHAHDIAHAKRVTNPGCYPTGAIGLLRPLLQAGLLPRDYPVSIHAVSGYSGGGRAAVDAFESGDAAARALPLQVYGLALEHKHVPEIRQHAGLAHRPFFVPAYGAYRQGIVLTIPIELRLLPAGVTGERLHACLAHHYADARHVDVMPLADAAAATHLDPQALNGTNDLRLGVLVNADGGQVLLSAVFDNLGKGASGAAVQNLDLMLGARHAA.

Cysteine 117 is a catalytic residue.

Belongs to the NAGSA dehydrogenase family. Type 2 subfamily.

It localises to the cytoplasm. The enzyme catalyses N-acetyl-L-glutamate 5-semialdehyde + phosphate + NADP(+) = N-acetyl-L-glutamyl 5-phosphate + NADPH + H(+). The protein operates within amino-acid biosynthesis; L-arginine biosynthesis; N(2)-acetyl-L-ornithine from L-glutamate: step 3/4. Functionally, catalyzes the NADPH-dependent reduction of N-acetyl-5-glutamyl phosphate to yield N-acetyl-L-glutamate 5-semialdehyde. The sequence is that of N-acetyl-gamma-glutamyl-phosphate reductase from Burkholderia orbicola (strain MC0-3).